The chain runs to 317 residues: Ribosomal RNA small subunit methyltransferase H (317 aa).

S-adenosyl-L-methionine-binding positions include 32 to 34 (GGH), aspartate 51, phenylalanine 78, aspartate 99, and glutamine 106.

It belongs to the methyltransferase superfamily. RsmH family.

It localises to the cytoplasm. It carries out the reaction cytidine(1402) in 16S rRNA + S-adenosyl-L-methionine = N(4)-methylcytidine(1402) in 16S rRNA + S-adenosyl-L-homocysteine + H(+). Its function is as follows. Specifically methylates the N4 position of cytidine in position 1402 (C1402) of 16S rRNA. In Helicobacter hepaticus (strain ATCC 51449 / 3B1), this protein is Ribosomal RNA small subunit methyltransferase H.